Consider the following 718-residue polypeptide: Polyribonucleotide nucleotidyltransferase (718 aa).

Residues Asp506 and Asp512 each contribute to the Mg(2+) site. Positions 572–632 constitute a KH domain; it reads PKLELFSVDP…EQIKAAKDYI (61 aa). Residues 657–718 form the S1 motif domain; it reads GQEFQGIVKK…NGKISVDLCE (62 aa).

This sequence belongs to the polyribonucleotide nucleotidyltransferase family. It depends on Mg(2+) as a cofactor.

The protein resides in the cytoplasm. The enzyme catalyses RNA(n+1) + phosphate = RNA(n) + a ribonucleoside 5'-diphosphate. Functionally, involved in mRNA degradation. Catalyzes the phosphorolysis of single-stranded polyribonucleotides processively in the 3'- to 5'-direction. This is Polyribonucleotide nucleotidyltransferase from Campylobacter jejuni subsp. doylei (strain ATCC BAA-1458 / RM4099 / 269.97).